The primary structure comprises 61 residues: Metallothionein-1B (61 aa).

The segment at 1-29 (MDPNCSCTTGGSCACAGSCKCKECKCTSC) is beta. A divalent metal cation-binding residues include Cys5, Cys7, Cys13, Cys15, Cys19, Cys21, Cys24, Cys26, Cys29, Cys33, Cys34, Cys36, Cys37, Cys41, Cys44, Cys48, Cys50, Cys57, Cys59, and Cys60. Positions 30 to 61 (KKCCCSCCPVGCAKCAQGCVCKGSSEKCRCCA) are alpha.

It belongs to the metallothionein superfamily. Type 1 family. In terms of assembly, monomer.

Metallothioneins have a high content of cysteine residues that bind various heavy metals; these proteins are transcriptionally regulated by both heavy metals and glucocorticoids. This is Metallothionein-1B (MT1B) from Homo sapiens (Human).